Here is a 306-residue protein sequence, read N- to C-terminus: 2-phospho-L-lactate transferase (306 aa).

Asp-54 and Arg-93 together coordinate 7,8-didemethyl-8-hydroxy-5-deazariboflavin.

The protein belongs to the CofD family. As to quaternary structure, homodimer. Mg(2+) serves as cofactor.

The catalysed reaction is (2S)-lactyl-2-diphospho-5'-guanosine + 7,8-didemethyl-8-hydroxy-5-deazariboflavin = oxidized coenzyme F420-0 + GMP + H(+). Its pathway is cofactor biosynthesis; coenzyme F420 biosynthesis. Its function is as follows. Catalyzes the transfer of the 2-phospholactate moiety from (2S)-lactyl-2-diphospho-5'-guanosine to 7,8-didemethyl-8-hydroxy-5-deazariboflavin (FO) with the formation of oxidized coenzyme F420-0 and GMP. The chain is 2-phospho-L-lactate transferase from Methanothermobacter thermautotrophicus (strain ATCC 29096 / DSM 1053 / JCM 10044 / NBRC 100330 / Delta H) (Methanobacterium thermoautotrophicum).